The following is a 603-amino-acid chain: NADH-ubiquinone oxidoreductase chain 5 (603 aa).

Helical transmembrane passes span 4-24 (ISTL…TTLL), 35-55 (ITKT…LLFV), 84-104 (FFSL…MEFS), 121-141 (LLLF…LQLF), 177-197 (IGDM…NSWE), 213-233 (LLGL…HPWL), 241-261 (TPVS…FTLI), 273-293 (VQTS…ICAL), 301-320 (IIAL…IGIN), 325-347 (AFTH…GSII), 366-386 (MPIT…MPFL), 413-433 (LIAV…ALLG), 457-477 (LILG…PHTT), 480-500 (MTMP…GFTV), and 583-603 (LMKL…LIAL).

This sequence belongs to the complex I subunit 5 family. In terms of assembly, core subunit of respiratory chain NADH dehydrogenase (Complex I) which is composed of 45 different subunits.

Its subcellular location is the mitochondrion inner membrane. The enzyme catalyses a ubiquinone + NADH + 5 H(+)(in) = a ubiquinol + NAD(+) + 4 H(+)(out). Functionally, core subunit of the mitochondrial membrane respiratory chain NADH dehydrogenase (Complex I) which catalyzes electron transfer from NADH through the respiratory chain, using ubiquinone as an electron acceptor. Essential for the catalytic activity and assembly of complex I. The protein is NADH-ubiquinone oxidoreductase chain 5 (MT-ND5) of Mammuthus primigenius (Siberian woolly mammoth).